The following is a 368-amino-acid chain: MGLAAPKNKIKLSHDPNNTRWSGNTDSFGHRMMKSQGWTPGEYLGAKDAAHAEFHTEANASHIRVVIKDNTLGLGAKIGSGVGHGECTGLDVFQNLLGRLNGKEEAEIEKEQKGREDLKRAIYAERKWGSIRFVKGGVLIGDKIQDLIDGEKERLKALEIKEKAAESSSEESDSSSDEEEEKSPEPVAEKKKSSKRKREEQEDEEKTSSKKSKKEKKEKKEKKSKKRQSEDEDEKDKSESKKSKKSKKDRKSKSKSTSEAEDETLDESALKARKKEKKEKKRKEKEAAGADTEEASSTSKSSKKSKKDKHKSPSTSKTSTKESTPIVSESSGRSTPMGIRSIRARHIAQKRMASMDVASLNQIFMIKS.

2 disordered regions span residues 1-28 and 161-339; these read MGLA…TDSF and KEKA…PMGI. The segment covering 15–27 has biased composition (polar residues); that stretch reads DPNNTRWSGNTDS. Positions 25 to 79 constitute a G-patch domain; sequence TDSFGHRMMKSQGWTPGEYLGAKDAAHAEFHTEANASHIRVVIKDNTLGLGAKIG. Positions 168 to 182 are enriched in acidic residues; it reads SSEESDSSSDEEEEK. Composition is skewed to basic residues over residues 209–226, 242–254, 271–283, and 301–312; these read SKKS…KSKK, KSKK…KSKS, KARK…KKRK, and SSKKSKKDKHKS. The span at 313–324 shows a compositional bias: low complexity; sequence PSTSKTSTKEST. The segment covering 325 to 334 has biased composition (polar residues); sequence PIVSESSGRS.

Belongs to the PINX1 family.

It localises to the nucleus. The protein localises to the nucleolus. Functionally, involved in rRNA-processing at A0, A1 and A2 sites and negatively regulates telomerase. The protein is Protein pxr1 (pxr1) of Botryotinia fuckeliana (strain B05.10) (Noble rot fungus).